The sequence spans 228 residues: Phosphoribosylformylglycinamidine synthase subunit PurQ (228 aa).

A Glutamine amidotransferase type-1 domain is found at Lys2–Arg225. The active-site Nucleophile is the Cys86. Residues His194 and Glu196 contribute to the active site.

As to quaternary structure, part of the FGAM synthase complex composed of 1 PurL, 1 PurQ and 2 PurS subunits.

The protein localises to the cytoplasm. It carries out the reaction N(2)-formyl-N(1)-(5-phospho-beta-D-ribosyl)glycinamide + L-glutamine + ATP + H2O = 2-formamido-N(1)-(5-O-phospho-beta-D-ribosyl)acetamidine + L-glutamate + ADP + phosphate + H(+). The catalysed reaction is L-glutamine + H2O = L-glutamate + NH4(+). The protein operates within purine metabolism; IMP biosynthesis via de novo pathway; 5-amino-1-(5-phospho-D-ribosyl)imidazole from N(2)-formyl-N(1)-(5-phospho-D-ribosyl)glycinamide: step 1/2. Functionally, part of the phosphoribosylformylglycinamidine synthase complex involved in the purines biosynthetic pathway. Catalyzes the ATP-dependent conversion of formylglycinamide ribonucleotide (FGAR) and glutamine to yield formylglycinamidine ribonucleotide (FGAM) and glutamate. The FGAM synthase complex is composed of three subunits. PurQ produces an ammonia molecule by converting glutamine to glutamate. PurL transfers the ammonia molecule to FGAR to form FGAM in an ATP-dependent manner. PurS interacts with PurQ and PurL and is thought to assist in the transfer of the ammonia molecule from PurQ to PurL. The chain is Phosphoribosylformylglycinamidine synthase subunit PurQ from Lacticaseibacillus casei (strain BL23) (Lactobacillus casei).